A 149-amino-acid chain; its full sequence is Myoglobin (149 aa).

At V2 the chain carries N-acetylvaline. One can recognise a Globin domain in the interval 2–143 (VDWEKVNSVW…ICSDIEKEYK (142 aa)). Position 89 (H89) interacts with heme b.

This sequence belongs to the globin family. As to quaternary structure, monomeric.

The protein localises to the cytoplasm. It localises to the sarcoplasm. The catalysed reaction is Fe(III)-heme b-[protein] + nitric oxide + H2O = Fe(II)-heme b-[protein] + nitrite + 2 H(+). It catalyses the reaction H2O2 + AH2 = A + 2 H2O. Functionally, monomeric heme protein which primary function is to store oxygen and facilitate its diffusion within muscle tissues. Reversibly binds oxygen through a pentacoordinated heme iron and enables its timely and efficient release as needed during periods of heightened demand. Depending on the oxidative conditions of tissues and cells, and in addition to its ability to bind oxygen, it also has a nitrite reductase activity whereby it regulates the production of bioactive nitric oxide. Under stress conditions, like hypoxia and anoxia, it also protects cells against reactive oxygen species thanks to its pseudoperoxidase activity. The protein is Myoglobin (mb) of Mustelus antarcticus (Gummy shark).